Consider the following 62-residue polypeptide: U10-hottentoxin-Hj3a (62 aa).

An N-terminal signal peptide occupies residues 1 to 22; it reads MQKLLIILILFCILKFNVDVEG. Cystine bridges form between Cys28/Cys46, Cys33/Cys59, and Cys37/Cys61.

This sequence belongs to the short scorpion toxin superfamily. Potassium channel inhibitor family. Alpha-KTx 23 subfamily. Expressed by the venom gland.

The protein localises to the secreted. May block potassium channels. This chain is U10-hottentoxin-Hj3a, found in Hottentotta judaicus (Black scorpion).